We begin with the raw amino-acid sequence, 115 residues long: Large ribosomal subunit protein uL22 (115 aa).

The protein belongs to the universal ribosomal protein uL22 family. Part of the 50S ribosomal subunit.

This protein binds specifically to 23S rRNA; its binding is stimulated by other ribosomal proteins, e.g. L4, L17, and L20. It is important during the early stages of 50S assembly. It makes multiple contacts with different domains of the 23S rRNA in the assembled 50S subunit and ribosome. Its function is as follows. The globular domain of the protein is located near the polypeptide exit tunnel on the outside of the subunit, while an extended beta-hairpin is found that lines the wall of the exit tunnel in the center of the 70S ribosome. The polypeptide is Large ribosomal subunit protein uL22 (Streptomyces griseus subsp. griseus (strain JCM 4626 / CBS 651.72 / NBRC 13350 / KCC S-0626 / ISP 5235)).